A 132-amino-acid chain; its full sequence is Small ribosomal subunit protein eS12 (132 aa).

It belongs to the eukaryotic ribosomal protein eS12 family.

The protein resides in the cytoplasm. The polypeptide is Small ribosomal subunit protein eS12 (rps12) (Xenopus laevis (African clawed frog)).